Consider the following 671-residue polypeptide: Probable ATP-dependent RNA helicase ddx41 (671 aa).

Coiled-coil stretches lie at residues 19–43 (IPLK…QPQQ) and 100–154 (LDQK…DMEE). Low complexity-rich tracts occupy residues 33-83 (LNNL…NNDN) and 125-139 (IEND…NNNG). Disordered stretches follow at residues 33–88 (LNNL…FEDE) and 125–148 (IEND…KEEK). The short motif at 222–250 (TTFKEMKIPKPVIDVLLEKGIKKPSPIQV) is the Q motif element. The region spanning 253–438 (LPVILSGRDM…RSALVLPVEV (186 aa)) is the Helicase ATP-binding domain. 266-273 (AYTGSGKT) lines the ATP pocket. The DEAD box signature appears at 386 to 389 (DEAD). The Helicase C-terminal domain maps to 449 to 609 (NVTQEVEFVK…KVPPALLEIP (161 aa)). Residues 617–636 (KLQDRNGNTGGGADDDDTKP) are disordered. A CCHC-type zinc finger spans residues 635–652 (KPCEYCDGRGHRLVNCPK).

It belongs to the DEAD box helicase family. DDX41 subfamily.

It localises to the nucleus. It carries out the reaction ATP + H2O = ADP + phosphate + H(+). The sequence is that of Probable ATP-dependent RNA helicase ddx41 (ddx41) from Dictyostelium discoideum (Social amoeba).